We begin with the raw amino-acid sequence, 270 residues long: Sulfur carrier protein FdhD (270 aa).

Catalysis depends on cysteine 116, which acts as the Cysteine persulfide intermediate. 253 to 258 contacts Mo-bis(molybdopterin guanine dinucleotide); that stretch reads FAREGK.

The protein belongs to the FdhD family.

The protein resides in the cytoplasm. In terms of biological role, required for formate dehydrogenase (FDH) activity. Acts as a sulfur carrier protein that transfers sulfur from IscS to the molybdenum cofactor prior to its insertion into FDH. The sequence is that of Sulfur carrier protein FdhD from Haemophilus influenzae (strain 86-028NP).